A 393-amino-acid polypeptide reads, in one-letter code: High mobility group protein DSP1 (393 aa).

The disordered stretch occupies residues 153-179 (QMQQQQQQQNVINSASPMSRVKADAKP). 2 consecutive DNA-binding regions (HMG box) follow at residues 179-249 (PRGR…QNYV) and 271-339 (PKRS…TEYK). Positions 364–374 (LLAAAAQQQHQ) are enriched in low complexity. The segment at 364-393 (LLAAAAQQQHQQLEEQHDDDDGDGDDDENQ) is disordered. The segment covering 379–393 (QHDDDDGDGDDDENQ) has biased composition (acidic residues).

Belongs to the HMGB family.

It localises to the nucleus. The protein resides in the chromosome. Binds preferentially single-stranded DNA and unwinds double-stranded DNA. The chain is High mobility group protein DSP1 (Dsp1) from Drosophila melanogaster (Fruit fly).